The primary structure comprises 245 residues: MILFPAIDLKNGQCVRLEQGDMARATVFNLDPTAQAKSFAAQGFQYLHVVDLDGAFAGKPMNAQAVESMLKVVSMPVQLGGGIRDLATVEAWLSKGIARVIIGTAAVRDPALVKQAAKSFPGRVAVGLDARDGKVAVEGWAESSQVTALEIAQRFEDAGVAAIIFTDIARDGLLKGINWDATIALAEAISIPVIASGGLASIEDVKAMLSPRAHKLEGAIAGRALYDGRLDPAEALALIGAARAA.

Residue Asp-8 is the Proton acceptor of the active site. The Proton donor role is filled by Asp-129.

Belongs to the HisA/HisF family.

The protein localises to the cytoplasm. The enzyme catalyses 1-(5-phospho-beta-D-ribosyl)-5-[(5-phospho-beta-D-ribosylamino)methylideneamino]imidazole-4-carboxamide = 5-[(5-phospho-1-deoxy-D-ribulos-1-ylimino)methylamino]-1-(5-phospho-beta-D-ribosyl)imidazole-4-carboxamide. It participates in amino-acid biosynthesis; L-histidine biosynthesis; L-histidine from 5-phospho-alpha-D-ribose 1-diphosphate: step 4/9. The polypeptide is 1-(5-phosphoribosyl)-5-[(5-phosphoribosylamino)methylideneamino] imidazole-4-carboxamide isomerase (Rhodopseudomonas palustris (strain HaA2)).